The primary structure comprises 104 residues: Nucleoid-associated protein Dtur_0258 (104 aa).

The tract at residues 84-104 (EKSAEKMGSLTDGLPLPPGLF) is disordered.

The protein belongs to the YbaB/EbfC family. As to quaternary structure, homodimer.

The protein resides in the cytoplasm. It is found in the nucleoid. Functionally, binds to DNA and alters its conformation. May be involved in regulation of gene expression, nucleoid organization and DNA protection. The sequence is that of Nucleoid-associated protein Dtur_0258 from Dictyoglomus turgidum (strain DSM 6724 / Z-1310).